Reading from the N-terminus, the 482-residue chain is Succinate-semialdehyde dehydrogenase [NADP(+)] GabD (482 aa).

Residues 156–157, 180–183, and 233–234 contribute to the NADP(+) site; these read WN, KPAS, and GS. Catalysis depends on glutamate 255, which acts as the Proton acceptor. Position 256 (leucine 256) interacts with NADP(+). The active-site Nucleophile is the cysteine 289. Glutamate 386 provides a ligand contact to NADP(+).

This sequence belongs to the aldehyde dehydrogenase family. Homotetramer.

It catalyses the reaction succinate semialdehyde + NADP(+) + H2O = succinate + NADPH + 2 H(+). The enzyme catalyses 5-oxopentanoate + NADP(+) + H2O = glutarate + NADPH + 2 H(+). It participates in amino-acid degradation; 4-aminobutanoate degradation. It functions in the pathway amino-acid degradation. Its function is as follows. Catalyzes the NADP(+)-dependent oxidation of succinate semialdehyde to succinate. Thereby functions in a GABA degradation pathway that allows some E.coli strains to utilize GABA as a nitrogen source for growth. Also catalyzes the conversion of glutarate semialdehyde to glutarate, as part of a L-lysine degradation pathway that proceeds via cadaverine, glutarate and L-2-hydroxyglutarate. The protein is Succinate-semialdehyde dehydrogenase [NADP(+)] GabD (gabD) of Escherichia coli (strain K12).